The primary structure comprises 416 residues: NADH-quinone oxidoreductase subunit D (416 aa).

Belongs to the complex I 49 kDa subunit family. In terms of assembly, NDH-1 is composed of 14 different subunits. Subunits NuoB, C, D, E, F, and G constitute the peripheral sector of the complex.

It is found in the cell inner membrane. The enzyme catalyses a quinone + NADH + 5 H(+)(in) = a quinol + NAD(+) + 4 H(+)(out). Functionally, NDH-1 shuttles electrons from NADH, via FMN and iron-sulfur (Fe-S) centers, to quinones in the respiratory chain. The immediate electron acceptor for the enzyme in this species is believed to be ubiquinone. Couples the redox reaction to proton translocation (for every two electrons transferred, four hydrogen ions are translocated across the cytoplasmic membrane), and thus conserves the redox energy in a proton gradient. The sequence is that of NADH-quinone oxidoreductase subunit D from Caulobacter sp. (strain K31).